Reading from the N-terminus, the 1341-residue chain is Restriction of telomere capping protein 1 (1341 aa).

The interval 1–39 is disordered; that stretch reads MSLSPHVENASIPKGSTPIPKNRNVSSIGKGEFLGSSSS. 6 WD repeats span residues 207–248, 256–296, 305–342, 367–406, 439–486, and 489–527; these read NKFS…SIDN, EHTR…SKSS, TASDSIRDVKWMPGYNFASKNDQGSSTYGNLKSGYKFA, AHTGPGLCLNWHPNQEYIATGGRDGKCCLWFVGDNANAAE, NTGY…IPKH, and LSETPSLGLVWWDENLIFNIDKGTRINGWDINKEPTVLE. 5 disordered regions span residues 559 to 593, 600 to 619, 630 to 651, 736 to 765, and 789 to 830; these read PELQPTSSTTCKKHPGTIKNPKNGNPENQGIIGGI, TGLTSFTPERPPTLKAGPTF, ASSFNSSSASLTSLTPQTENRE, KNATETHGDNTTTTNNNDDGDDDDDDDDDD, and NEKV…DRAR. Over residues 630-644 the composition is skewed to low complexity; sequence ASSFNSSSASLTSLT. The segment covering 753-765 has biased composition (acidic residues); that stretch reads DDGDDDDDDDDDD. Positions 814–823 are enriched in low complexity; it reads SSISSISASR. The WD 7 repeat unit spans residues 843–883; that stretch reads KIQTLVDLISIATHNASVYLSIDDLTNFKIWILIRDSLLWD. Disordered regions lie at residues 941-962 and 1013-1043; these read AFRANSDEPSDAEKKPVSKLKE and DEHEHQEEEQPHDSPTKSAQFHASPIAKSIP. Basic and acidic residues-rich tracts occupy residues 951–962 and 1015–1027; these read DAEKKPVSKLKE and HEHQEEEQPHDSP. A phosphoserine mark is found at S1036, S1080, S1087, S1089, S1123, and S1133. WD repeat units follow at residues 1129 to 1169 and 1216 to 1255; these read SRPD…KQLY and LFGIAADVLKYCPFEDIMGSEGDQSSIRLFCERCGELITN. The segment at 1293 to 1335 adopts an RING-type; degenerate zinc-finger fold; sequence CVLCERPLKKLTMVILPCGHEGHFQCIQEWFLDENEQECPGGC.

This sequence belongs to the WD repeat RTC1 family. Component of the SEA complex composed of at least IML1/SEA1, RTC1/SEA2, MTC5/SEA3, NPR2, NPR3, SEA4, SEC13 and SEH1. Interacts with ribosomes.

It is found in the vacuole membrane. In terms of biological role, component of the SEA complex which coats the vacuolar membrane and is involved in intracellular trafficking, autophagy, response to nitrogen starvation, and amino acid biogenesis. May be involved in a process influencing telomere capping. The chain is Restriction of telomere capping protein 1 (RTC1) from Saccharomyces cerevisiae (strain ATCC 204508 / S288c) (Baker's yeast).